A 504-amino-acid polypeptide reads, in one-letter code: Probable cytosol aminopeptidase (504 aa).

The Mn(2+) site is built by lysine 272 and aspartate 277. The active site involves lysine 284. Residues aspartate 295, aspartate 354, and glutamate 356 each coordinate Mn(2+). The active site involves arginine 358.

This sequence belongs to the peptidase M17 family. Mn(2+) serves as cofactor.

The protein localises to the cytoplasm. It catalyses the reaction Release of an N-terminal amino acid, Xaa-|-Yaa-, in which Xaa is preferably Leu, but may be other amino acids including Pro although not Arg or Lys, and Yaa may be Pro. Amino acid amides and methyl esters are also readily hydrolyzed, but rates on arylamides are exceedingly low.. It carries out the reaction Release of an N-terminal amino acid, preferentially leucine, but not glutamic or aspartic acids.. Its function is as follows. Presumably involved in the processing and regular turnover of intracellular proteins. Catalyzes the removal of unsubstituted N-terminal amino acids from various peptides. This Chlorobaculum tepidum (strain ATCC 49652 / DSM 12025 / NBRC 103806 / TLS) (Chlorobium tepidum) protein is Probable cytosol aminopeptidase.